The chain runs to 368 residues: Phospho-N-acetylmuramoyl-pentapeptide-transferase (368 aa).

9 consecutive transmembrane segments (helical) span residues 30–50 (AAAI…IAYL), 72–92 (LPTM…FLWA), 99–119 (VWLV…DDYL), 135–155 (LIGQ…DPSM), 170–190 (LTIN…TAIS), 201–221 (GLAA…AYLA), 238–258 (GGEV…FLWF), 265–286 (IIMG…ALLI), and 345–365 (KIVI…LMTL).

Belongs to the glycosyltransferase 4 family. MraY subfamily. The cofactor is Mg(2+).

It is found in the cell inner membrane. The catalysed reaction is UDP-N-acetyl-alpha-D-muramoyl-L-alanyl-gamma-D-glutamyl-meso-2,6-diaminopimeloyl-D-alanyl-D-alanine + di-trans,octa-cis-undecaprenyl phosphate = di-trans,octa-cis-undecaprenyl diphospho-N-acetyl-alpha-D-muramoyl-L-alanyl-D-glutamyl-meso-2,6-diaminopimeloyl-D-alanyl-D-alanine + UMP. It participates in cell wall biogenesis; peptidoglycan biosynthesis. Catalyzes the initial step of the lipid cycle reactions in the biosynthesis of the cell wall peptidoglycan: transfers peptidoglycan precursor phospho-MurNAc-pentapeptide from UDP-MurNAc-pentapeptide onto the lipid carrier undecaprenyl phosphate, yielding undecaprenyl-pyrophosphoryl-MurNAc-pentapeptide, known as lipid I. This Chlorobium chlorochromatii (strain CaD3) protein is Phospho-N-acetylmuramoyl-pentapeptide-transferase.